The sequence spans 131 residues: Small ribosomal subunit protein uS8 (131 aa).

This sequence belongs to the universal ribosomal protein uS8 family. Part of the 30S ribosomal subunit. Contacts proteins S5 and S12.

Functionally, one of the primary rRNA binding proteins, it binds directly to 16S rRNA central domain where it helps coordinate assembly of the platform of the 30S subunit. In Zymomonas mobilis subsp. mobilis (strain ATCC 31821 / ZM4 / CP4), this protein is Small ribosomal subunit protein uS8.